The chain runs to 572 residues: MGQQWPAGEIARLILDGFDDYREHFRQITDGARVRFEQAQWQEAQRASAARINLYEEKVAQTRERLLEGFDESLLEVGQWPLVKSAYIALIDLRFDDELAETWFNSIFCSLFSHDLISDGCMFIHTTRPSLRNQPSAAQTRNYRPAGELHLALQAIFDDYRFDVSYEDLPRDLQRLEGQLRASLPDWICKDPQQCIELFSSVLYRNKGAYLVGRIYTPDEQWPLVIPLLHREGLGIQVDAAITDEAEVSIIFSFTRSYFMVDVAIPAEFVGFLKRILPGKHIAELYTSIGFYKHGKSEFYRALIGHLASTDDRFIMAPGVRGMVMSVFTLPGFNTVFKIIKDRFAHAKTVDRKTVIEKYRLVKSVDRVGRMADTQEFSDFRFPKAKFEPECLAELLEVAPSTVVVEGDTVLVRHCWTERRMTPLNLYLESASEAQVREALDDYGLAIKQLAAANIFPGDMLLKNFGVTRHGRVVFYDYDEICFLTEVNFRRIPPPRFPEDEMSSEPWYSVGPMDVFPEEFPPFLFADIKQRRLFSQLHGNLYDADYWKQLQDAIRAGKVIDVFPYRRKSPVE.

ATP contacts are provided by residues alanine 317–methionine 323 and lysine 338. The active site involves aspartate 373.

This sequence belongs to the AceK family.

It is found in the cytoplasm. It carries out the reaction L-seryl-[isocitrate dehydrogenase] + ATP = O-phospho-L-seryl-[isocitrate dehydrogenase] + ADP + H(+). In terms of biological role, bifunctional enzyme which can phosphorylate or dephosphorylate isocitrate dehydrogenase (IDH) on a specific serine residue. This is a regulatory mechanism which enables bacteria to bypass the Krebs cycle via the glyoxylate shunt in response to the source of carbon. When bacteria are grown on glucose, IDH is fully active and unphosphorylated, but when grown on acetate or ethanol, the activity of IDH declines drastically concomitant with its phosphorylation. This is Isocitrate dehydrogenase kinase/phosphatase from Ectopseudomonas mendocina (strain ymp) (Pseudomonas mendocina).